A 327-amino-acid chain; its full sequence is Beta-1,4-galactosyltransferase 7 (327 aa).

The Cytoplasmic portion of the chain corresponds to 1–30; that stretch reads MFPSRRKAAQLPWEDGRSGLLSGGLPRKCS. A helical; Signal-anchor for type II membrane protein transmembrane segment spans residues 31 to 51; that stretch reads VFHLFVACLSLGFFSLLWLQL. Residues 52 to 327 are Lumenal-facing; the sequence is SCSGDVARAV…KTATPWCTFS (276 aa). Residues 63–87 are disordered; that stretch reads GQGQETSGPPRACPPEPPPEHWEED. UDP-alpha-D-galactose-binding positions include 100–104 and 139–141; these read PFRER and FNR. Asparagine 154 carries an N-linked (GlcNAc...) asparagine glycan. Residues 164–165, tyrosine 194, and tryptophan 224 each bind UDP-alpha-D-galactose; that span reads VD. Residue aspartate 165 participates in Mn(2+) binding. Residue 226–229 participates in N-acetyl-D-glucosamine binding; that stretch reads REDD. Residue histidine 257 participates in Mn(2+) binding. UDP-alpha-D-galactose contacts are provided by residues 257–259 and arginine 266; that span reads HLH. The cysteines at positions 316 and 324 are disulfide-linked.

The protein belongs to the glycosyltransferase 7 family. Requires Mn(2+) as cofactor. As to expression, high expression in heart, pancreas and liver, medium in placenta and kidney, low in brain, skeletal muscle and lung.

The protein resides in the golgi apparatus. It localises to the golgi stack membrane. The enzyme catalyses 3-O-(beta-D-xylosyl)-L-seryl-[protein] + UDP-alpha-D-galactose = 3-O-(beta-D-galactosyl-(1-&gt;4)-beta-D-xylosyl)-L-seryl-[protein] + UDP + H(+). It participates in protein modification; protein glycosylation. Required for the biosynthesis of the tetrasaccharide linkage region of proteoglycans, especially for small proteoglycans in skin fibroblasts. The protein is Beta-1,4-galactosyltransferase 7 (B4GALT7) of Homo sapiens (Human).